A 1070-amino-acid chain; its full sequence is Inactive tyrosine-protein kinase 7 (1070 aa).

Positions 1–30 (MGAARGSPARPRRLPLLSVLLLPLLGGTQT) are cleaved as a signal peptide. Ig-like C2-type domains lie at 31–120 (AIVF…ASFN), 128–218 (PVVL…FTLS), 225–317 (ARVV…EATL), 309–407 (PPII…VNIT), 412–497 (PSWL…ARVQ), 503–586 (KFTP…HVQL), and 578–680 (GQIR…APLY). Topologically, residues 31–704 (AIVFIKQPSS…SPPPYKMIQT (674 aa)) are extracellular. C53 and C101 are disulfide-bonded. N-linked (GlcNAc...) asparagine glycans are attached at residues N116, N175, N184, N214, N268, and N283. C150 and C200 are oxidised to a cystine. 2 disulfide bridges follow: C246-C301 and C343-C391. N405, N463, N567, and N646 each carry an N-linked (GlcNAc...) asparagine glycan. Disulfide bonds link C433-C481, C524-C570, and C613-C664. A helical membrane pass occupies residues 705–725 (IGLSVGAAVAYIIAVLGLMFY). Residues 726-1070 (CKKRCKAKRL…LGDSTVDSKP (345 aa)) lie on the Cytoplasmic side of the membrane. Disordered stretches follow at residues 736–759 (QKQP…NGQP) and 773–793 (GSGP…HFPR). The tract at residues 794–1070 (SSLQPITTLG…LGDSTVDSKP (277 aa)) is interaction with CTNNB1. The Protein kinase; inactive domain maps to 796 to 1066 (LQPITTLGKS…IASALGDSTV (271 aa)). S1064 bears the Phosphoserine mark.

Belongs to the protein kinase superfamily. Tyr protein kinase family. Insulin receptor subfamily. Interacts with CTNNB1. In terms of processing, MMP14 cleaves PTK7 between Pro-621 and Leu-622 generating an N-terminal soluble (70 kDa) fragment and a membrane C-terminal (50 kDa) fragment. Proteolysis by MMP14 regulates PTK7 function in non-canonical Wnt signaling pathway. In terms of tissue distribution, highly expressed in lung, liver, pancreas, kidney, placenta and melanocytes. Weakly expressed in thyroid gland, ovary, brain, heart and skeletal muscle. Also expressed in erythroleukemia cells. But not expressed in colon.

The protein resides in the membrane. The protein localises to the cell junction. In terms of biological role, inactive tyrosine kinase involved in Wnt signaling pathway. Component of both the non-canonical (also known as the Wnt/planar cell polarity signaling) and the canonical Wnt signaling pathway. Functions in cell adhesion, cell migration, cell polarity, proliferation, actin cytoskeleton reorganization and apoptosis. Has a role in embryogenesis, epithelial tissue organization and angiogenesis. In Homo sapiens (Human), this protein is Inactive tyrosine-protein kinase 7 (PTK7).